The primary structure comprises 557 residues: Hyaluronan synthase 3 (557 aa).

Residues 1–10 lie on the Cytoplasmic side of the membrane; the sequence is MPGKFQTGLR. Residues 11–31 traverse the membrane as a helical segment; that stretch reads VLATCLFALLVLGGILVAYVT. Over 32–44 the chain is Extracellular; it reads GYQFIHTDRHHLS. The chain crosses the membrane as a helical span at residues 45–65; it reads FGLYGAILGLHLLSQSLFAFL. Residues 66–367 lie on the Cytoplasmic side of the membrane; it reads EHRKMRGGGR…NALWFHKHHL (302 aa). The chain crosses the membrane as a helical span at residues 368 to 388; it reads WMTYESVVTGFFPFFLVATVV. The Extracellular portion of the chain corresponds to 389–398; sequence QLFYRGRVWN. A helical transmembrane segment spans residues 399–419; it reads ILLFLLTVQLVGILKATYACI. The Cytoplasmic portion of the chain corresponds to 420-430; sequence LRGNAEMIFMS. A helical membrane pass occupies residues 431 to 451; the sequence is LYSLLYMTSLLPAKIFAVITI. Topologically, residues 452 to 463 are extracellular; sequence KKSGWGTSGRRK. The chain crosses the membrane as a helical span at residues 464–484; that stretch reads LVVNFMGMVPVSVWFCILLGG. Residues 485 to 501 lie on the Cytoplasmic side of the membrane; that stretch reads LVYTAYCQSHDPFTETE. A helical membrane pass occupies residues 502-522; that stretch reads LLFLLTGAILYGCYWVALLSL. Residues 523–557 are Extracellular-facing; it reads YLALIARRCGKRQELYNLALEEVSEPEPAAKAIKP.

The protein belongs to the NodC/HAS family. It depends on Mg(2+) as a cofactor. O-GlcNAcylation increases the hyaluronan synthase activity, HAS3 stability and its plasma membrane residence. The concentration of UDP-GlcNAc controls the level of O-GlcNAc modification.

The protein localises to the cell membrane. It is found in the golgi apparatus membrane. It localises to the golgi apparatus. The protein resides in the trans-Golgi network membrane. Its subcellular location is the cytoplasmic vesicle. It carries out the reaction [hyaluronan](n) + UDP-N-acetyl-alpha-D-glucosamine = N-acetyl-beta-D-glucosaminyl-(1-&gt;4)-[hyaluronan](n) + UDP + H(+). The enzyme catalyses N-acetyl-beta-D-glucosaminyl-(1-&gt;4)-[hyaluronan](n) + UDP-alpha-D-glucuronate = [hyaluronan](n+1) + UDP + H(+). The protein operates within glycan biosynthesis; hyaluronan biosynthesis. Catalyzes the addition of GlcNAc or GlcUA monosaccharides to the nascent hyaluronan polymer. Therefore, it is essential to hyaluronan synthesis a major component of most extracellular matrices that has a structural role in tissues architectures and regulates cell adhesion, migration and differentiation. This is one of three isoenzymes responsible for cellular hyaluronan synthesis. The chain is Hyaluronan synthase 3 (has3) from Xenopus laevis (African clawed frog).